The sequence spans 464 residues: Putative protein TIC 214 C-terminal part (464 aa).

It belongs to the TIC214 family. In terms of assembly, part of the Tic complex.

The protein resides in the plastid. Its subcellular location is the chloroplast. Its function is as follows. Involved in protein precursor import into chloroplasts. May be part of an intermediate translocation complex acting as a protein-conducting channel at the inner envelope. This is Putative protein TIC 214 C-terminal part from Marchantia polymorpha (Common liverwort).